Reading from the N-terminus, the 233-residue chain is Large ribosomal subunit protein uL22m (233 aa).

It belongs to the universal ribosomal protein uL22 family. Component of the mitochondrial ribosome large subunit (39S) which comprises a 16S rRNA and about 50 distinct proteins.

The protein localises to the mitochondrion. This is Large ribosomal subunit protein uL22m (mRpL22) from Drosophila melanogaster (Fruit fly).